We begin with the raw amino-acid sequence, 209 residues long: Ribosomal RNA large subunit methyltransferase E (209 aa).

Positions 63, 65, 83, 99, and 124 each coordinate S-adenosyl-L-methionine. The Proton acceptor role is filled by lysine 164.

The protein belongs to the class I-like SAM-binding methyltransferase superfamily. RNA methyltransferase RlmE family.

The protein resides in the cytoplasm. The enzyme catalyses uridine(2552) in 23S rRNA + S-adenosyl-L-methionine = 2'-O-methyluridine(2552) in 23S rRNA + S-adenosyl-L-homocysteine + H(+). Functionally, specifically methylates the uridine in position 2552 of 23S rRNA at the 2'-O position of the ribose in the fully assembled 50S ribosomal subunit. The polypeptide is Ribosomal RNA large subunit methyltransferase E (Sodalis glossinidius (strain morsitans)).